The primary structure comprises 322 residues: Putative UDP-N-acetylglucosamine--dolichyl-phosphate N-acetylglucosaminephosphotransferase (322 aa).

9 helical membrane-spanning segments follow: residues 5 to 25 (AILL…VWVI), 46 to 66 (IPLL…FSLL), 76 to 96 (IPAV…DDIF), 102 to 122 (VRAF…VGHS), 123 to 143 (IISI…IIII), 160 to 180 (LNGL…YIGL), 186 to 206 (TYQA…FLIF), 222 to 242 (FIGA…ALAI), and 295 to 315 (YQVV…AVIL).

This sequence belongs to the glycosyltransferase 4 family.

The protein resides in the cell membrane. The enzyme catalyses a di-trans,poly-cis-dolichyl phosphate + UDP-N-acetyl-alpha-D-glucosamine = an N-acetyl-alpha-D-glucosaminyl-diphospho-di-trans,poly-cis-dolichol + UMP. Inhibited by tunicamycin. This chain is Putative UDP-N-acetylglucosamine--dolichyl-phosphate N-acetylglucosaminephosphotransferase (gnpTA), found in Saccharolobus solfataricus (strain ATCC 35092 / DSM 1617 / JCM 11322 / P2) (Sulfolobus solfataricus).